A 274-amino-acid polypeptide reads, in one-letter code: 2,3,4,5-tetrahydropyridine-2,6-dicarboxylate N-succinyltransferase (274 aa).

Substrate is bound by residues Arg-107 and Asp-144.

Belongs to the transferase hexapeptide repeat family. Homotrimer.

It is found in the cytoplasm. It catalyses the reaction (S)-2,3,4,5-tetrahydrodipicolinate + succinyl-CoA + H2O = (S)-2-succinylamino-6-oxoheptanedioate + CoA. It participates in amino-acid biosynthesis; L-lysine biosynthesis via DAP pathway; LL-2,6-diaminopimelate from (S)-tetrahydrodipicolinate (succinylase route): step 1/3. The protein is 2,3,4,5-tetrahydropyridine-2,6-dicarboxylate N-succinyltransferase of Cereibacter sphaeroides (strain ATCC 17025 / ATH 2.4.3) (Rhodobacter sphaeroides).